We begin with the raw amino-acid sequence, 186 residues long: Large ribosomal subunit protein uL5 (186 aa).

The protein belongs to the universal ribosomal protein uL5 family. Part of the 50S ribosomal subunit; part of the 5S rRNA/L5/L18/L25 subcomplex. Contacts the 5S rRNA and the P site tRNA. Forms a bridge to the 30S subunit in the 70S ribosome.

In terms of biological role, this is one of the proteins that bind and probably mediate the attachment of the 5S RNA into the large ribosomal subunit, where it forms part of the central protuberance. In the 70S ribosome it contacts protein S13 of the 30S subunit (bridge B1b), connecting the 2 subunits; this bridge is implicated in subunit movement. Contacts the P site tRNA; the 5S rRNA and some of its associated proteins might help stabilize positioning of ribosome-bound tRNAs. In Phenylobacterium zucineum (strain HLK1), this protein is Large ribosomal subunit protein uL5.